A 202-amino-acid polypeptide reads, in one-letter code: Protein U22 (202 aa).

2 helical membrane passes run 5–25 (GWSLAWVSVLYVSVIPSLHII) and 172–192 (FVYYCISVYLFAVAVFCSCWF).

The protein localises to the host membrane. This Human herpesvirus 6B (strain Z29) (HHV-6 variant B) protein is Protein U22 (U22).